The primary structure comprises 463 residues: Probable glycosyltransferase 3 (463 aa).

The Cytoplasmic portion of the chain corresponds to 1 to 24 (MAVTGGGRPAVRQQAARGKQMQRT). The chain crosses the membrane as a helical; Signal-anchor for type II membrane protein span at residues 25-47 (FNNVKITLICGFITLLVLRGTVG). The Lumenal segment spans residues 48–463 (INLLTYGVGG…ALKMDAKIES (416 aa)). The tract at residues 82–125 (EIRSDTDDDDDDEEEEPLGVDASTTTTTNSTTTTATAARRRSSN) is disordered. Residues 87 to 99 (TDDDDDDEEEEPL) are compositionally biased toward acidic residues. The segment covering 103-118 (ASTTTTTNSTTTTATA) has biased composition (low complexity). Residues Asn110, Asn125, and Asn442 are each glycosylated (N-linked (GlcNAc...) asparagine).

It belongs to the glycosyltransferase 34 family.

It localises to the golgi apparatus membrane. In terms of biological role, probable glycosyltransferase that may be involved in the biosynthesis of xyloglucan. The chain is Probable glycosyltransferase 3 from Oryza sativa subsp. japonica (Rice).